The primary structure comprises 412 residues: uncharacterized protein (412 aa).

The UmuC domain maps to 20-199 (FFYFDFDAFF…LPIVELPGIG (180 aa)).

It belongs to the DNA polymerase type-Y family.

This is an uncharacterized protein from Mycoplasma pneumoniae (strain ATCC 29342 / M129 / Subtype 1) (Mycoplasmoides pneumoniae).